A 308-amino-acid chain; its full sequence is Maspardin (308 aa).

An AB hydrolase-1 domain is found at 87-159 (FCDGFRKLLD…NSFWLMPAFM (73 aa)). Ser-304 is subject to Phosphoserine.

This sequence belongs to the AB hydrolase superfamily. As to quaternary structure, interacts with CD4. Interacts with ALDH16A1.

It is found in the cytoplasm. May play a role as a negative regulatory factor in CD4-dependent T-cell activation. This is Maspardin (SPG21) from Pongo abelii (Sumatran orangutan).